The chain runs to 207 residues: Methylated-DNA--protein-cysteine methyltransferase (207 aa).

Cys5 contributes to the Zn(2+) binding site. The residue at position 14 (Ser14) is a Phosphoserine. Residues Cys24, His29, and His85 each contribute to the Zn(2+) site. Thr95, Tyr114, Gln115, Asn123, and Arg128 together coordinate DNA. The Nucleophile; methyl group acceptor role is filled by Cys145. Residue Ser151 coordinates DNA. Position 201 is a phosphoserine (Ser201).

The protein belongs to the MGMT family. Requires Zn(2+) as cofactor.

It localises to the nucleus. It carries out the reaction a 6-O-methyl-2'-deoxyguanosine in DNA + L-cysteinyl-[protein] = S-methyl-L-cysteinyl-[protein] + a 2'-deoxyguanosine in DNA. It catalyses the reaction a 4-O-methyl-thymidine in DNA + L-cysteinyl-[protein] = a thymidine in DNA + S-methyl-L-cysteinyl-[protein]. Involved in the cellular defense against the biological effects of O6-methylguanine (O6-MeG) and O4-methylthymine (O4-MeT) in DNA. Repairs the methylated nucleobase in DNA by stoichiometrically transferring the methyl group to a cysteine residue in the enzyme. This is a suicide reaction: the enzyme is irreversibly inactivated. This chain is Methylated-DNA--protein-cysteine methyltransferase (MGMT), found in Homo sapiens (Human).